We begin with the raw amino-acid sequence, 440 residues long: L-seryl-tRNA(Sec) selenium transferase (440 aa).

N6-(pyridoxal phosphate)lysine is present on Lys282.

The protein belongs to the SelA family. Pyridoxal 5'-phosphate is required as a cofactor.

Its subcellular location is the cytoplasm. The catalysed reaction is L-seryl-tRNA(Sec) + selenophosphate + H(+) = L-selenocysteinyl-tRNA(Sec) + phosphate. It participates in aminoacyl-tRNA biosynthesis; selenocysteinyl-tRNA(Sec) biosynthesis; selenocysteinyl-tRNA(Sec) from L-seryl-tRNA(Sec) (bacterial route): step 1/1. Its function is as follows. Converts seryl-tRNA(Sec) to selenocysteinyl-tRNA(Sec) required for selenoprotein biosynthesis. This Campylobacter jejuni (strain RM1221) protein is L-seryl-tRNA(Sec) selenium transferase.